The chain runs to 117 residues: Protein SMALL AUXIN UP-REGULATED RNA 54 (117 aa).

Belongs to the ARG7 family. As to expression, expressed in trichomes. Hardly observed in leaves.

The protein resides in the cell membrane. In terms of biological role, provide a mechanistic link between auxin and plasma membrane H(+)-ATPases (PM H(+)-ATPases, e.g. AHA1 and AHA2), and triggers PM H(+)-ATPases activity by promoting phosphorylation of their C-terminal autoinhibitory domain as a result of PP2C-D subfamily of type 2C phosphatases inhibition, thus leading to the acidification of the apoplast and the facilitation of solutes and water uptake to drive cell expansion. Triggers plant growth probably by promoting cell elongation. Regulates branch angles and bending. The chain is Protein SMALL AUXIN UP-REGULATED RNA 54 from Arabidopsis thaliana (Mouse-ear cress).